The chain runs to 355 residues: MRLTHVTACICLLVAVAVLFSGCTGTTDDQTTTPTPTATAAEEVQLKVFHAGSLTGPFEKVKAEFEAEHSGVTVLLEPAGSVDCVKKITENGKPADVLASADYALIPQLMVPDDADWYLTFAKNRMVLTYSNESKYADEITAENWYEVLARDGVRWGFSDPNSDPCGYRSPMVIQLAEGYYEDDQIFETLVGEHSEITVTEEGGVYTIHAADPKPDSTTLTIRPKSVELVQMIQAGGLDYAWEYRSVAVQNDLEFIELPEEIDLSSIDFAENYATVQTEAKKGDGTTLYVGSPIVYGVTVPKIAQHPDLGIEFVEMLIGATGQEILERDGQPPIVPAGGYGEVPDALQSLVEMKS.

The signal sequence occupies residues 1–22 (MRLTHVTACICLLVAVAVLFSG).

The protein belongs to the bacterial solute-binding protein 1 family. WtpA subfamily.

This is an uncharacterized protein from Methanoculleus marisnigri (strain ATCC 35101 / DSM 1498 / JR1).